The primary structure comprises 158 residues: NAD(P)H-quinone oxidoreductase subunit J, chloroplastic (158 aa).

It belongs to the complex I 30 kDa subunit family. As to quaternary structure, NDH is composed of at least 16 different subunits, 5 of which are encoded in the nucleus.

The protein localises to the plastid. The protein resides in the chloroplast thylakoid membrane. It catalyses the reaction a plastoquinone + NADH + (n+1) H(+)(in) = a plastoquinol + NAD(+) + n H(+)(out). The enzyme catalyses a plastoquinone + NADPH + (n+1) H(+)(in) = a plastoquinol + NADP(+) + n H(+)(out). Its function is as follows. NDH shuttles electrons from NAD(P)H:plastoquinone, via FMN and iron-sulfur (Fe-S) centers, to quinones in the photosynthetic chain and possibly in a chloroplast respiratory chain. The immediate electron acceptor for the enzyme in this species is believed to be plastoquinone. Couples the redox reaction to proton translocation, and thus conserves the redox energy in a proton gradient. The chain is NAD(P)H-quinone oxidoreductase subunit J, chloroplastic from Crucihimalaya wallichii (Rock-cress).